A 207-amino-acid polypeptide reads, in one-letter code: Probable GTP-binding protein EngB (207 aa).

Residues 24 to 199 (GGYEVAFAGR…RAIVGAWLGL (176 aa)) enclose the EngB-type G domain. Residues 32–39 (GRSNAGKS), 59–63 (GRTQQ), 77–80 (DLPG), 144–147 (TKAD), and 178–180 (YSG) contribute to the GTP site. Ser-39 and Thr-61 together coordinate Mg(2+).

This sequence belongs to the TRAFAC class TrmE-Era-EngA-EngB-Septin-like GTPase superfamily. EngB GTPase family. It depends on Mg(2+) as a cofactor.

Necessary for normal cell division and for the maintenance of normal septation. This is Probable GTP-binding protein EngB from Xanthomonas euvesicatoria pv. vesicatoria (strain 85-10) (Xanthomonas campestris pv. vesicatoria).